The following is an 837-amino-acid chain: E3 ubiquitin-protein ligase bre-1 (837 aa).

Residues 1–33 (MMKRSNEGIGGENYASSPSDDGQQKRRKIQFEP) form a disordered region. The tract at residues 1 to 313 (MMKRSNEGIG…AKEIENLRLE (313 aa)) is interaction with ubc-1. Coiled coils occupy residues 54–89 (TSKL…ESNF) and 185–253 (HKEL…KHMR). Positions 269 to 302 (GQSGGNGGATPSSSGTTNATEKKISAPDIPPSET) are disordered. The segment covering 277-287 (ATPSSSGTTNA) has biased composition (polar residues). Coiled-coil stretches lie at residues 300-397 (SETA…AFRS), 458-651 (DEMK…KAQT), and 677-763 (VQFK…NESV). The segment at 785-824 (CPSCKTRPKDCIMLKCYHLFCETCIKTMYDTRQRKCPKCN) adopts an RING-type zinc-finger fold.

This sequence belongs to the BRE1 family. In terms of assembly, interacts with ubc-1. Interacts with mrg-1. As to expression, in adult animals, expressed in oocytes, germ cells, pharyngeal and intestinal cells.

The protein localises to the nucleus. It catalyses the reaction S-ubiquitinyl-[E2 ubiquitin-conjugating enzyme]-L-cysteine + [acceptor protein]-L-lysine = [E2 ubiquitin-conjugating enzyme]-L-cysteine + N(6)-ubiquitinyl-[acceptor protein]-L-lysine.. The protein operates within protein modification; protein ubiquitination. E3 ubiquitin-protein ligase that mediates monoubiquitination of 'Lys-117' of histone H2B. H2B 'Lys-117' ubiquitination gives a specific tag for epigenetic transcriptional activation and is also prerequisite for histone H3 'Lys-4' and 'Lys-79' methylation. Involved in regulating stem cell proliferative fate. This is E3 ubiquitin-protein ligase bre-1 (rfp-1) from Caenorhabditis elegans.